The sequence spans 625 residues: Chaperone protein DnaK (625 aa).

At threonine 197 the chain carries Phosphothreonine; by autocatalysis. The segment at 598-625 (AYAKEQGGTQQGTDTKKKDDDVIDAEVE) is disordered.

The protein belongs to the heat shock protein 70 family.

Its function is as follows. Acts as a chaperone. The polypeptide is Chaperone protein DnaK (Helicobacter hepaticus (strain ATCC 51449 / 3B1)).